We begin with the raw amino-acid sequence, 163 residues long: NADH-quinone oxidoreductase subunit I (163 aa).

4Fe-4S ferredoxin-type domains follow at residues 53–83 (LRRY…IEAG) and 94–123 (VRYD…EGPN). The [4Fe-4S] cluster site is built by Cys63, Cys66, Cys69, Cys73, Cys103, Cys106, Cys109, and Cys113.

It belongs to the complex I 23 kDa subunit family. NDH-1 is composed of 14 different subunits. Subunits NuoA, H, J, K, L, M, N constitute the membrane sector of the complex. [4Fe-4S] cluster is required as a cofactor.

It is found in the cell inner membrane. It catalyses the reaction a quinone + NADH + 5 H(+)(in) = a quinol + NAD(+) + 4 H(+)(out). In terms of biological role, NDH-1 shuttles electrons from NADH, via FMN and iron-sulfur (Fe-S) centers, to quinones in the respiratory chain. The immediate electron acceptor for the enzyme in this species is believed to be ubiquinone. Couples the redox reaction to proton translocation (for every two electrons transferred, four hydrogen ions are translocated across the cytoplasmic membrane), and thus conserves the redox energy in a proton gradient. The polypeptide is NADH-quinone oxidoreductase subunit I (Agrobacterium fabrum (strain C58 / ATCC 33970) (Agrobacterium tumefaciens (strain C58))).